Consider the following 81-residue polypeptide: Sulfur carrier protein TusA (81 aa).

Residue Cys-19 is the Cysteine persulfide intermediate of the active site.

It belongs to the sulfur carrier protein TusA family.

It is found in the cytoplasm. Its function is as follows. Sulfur carrier protein which probably makes part of a sulfur-relay system. This Shewanella sp. (strain ANA-3) protein is Sulfur carrier protein TusA.